The sequence spans 1007 residues: Ephrin type-A receptor 10 (1007 aa).

Positions 1 to 22 are cleaved as a signal peptide; the sequence is METGAGPHPLRLFVCLIPLCLA. Over 23 to 565 the chain is Extracellular; that stretch reads LLLGPGRPGT…APGSRDQSPA (543 aa). Residues 35 to 216 form the Eph LBD domain; sequence EVILLDSKAS…YYKQCRATVR (182 aa). The N-linked (GlcNAc...) asparagine glycan is linked to N311. 2 disordered regions span residues 323–343 and 467–486; these read ARSP…APRD and PQSV…PGTN. Fibronectin type-III domains are found at residues 340 to 452 and 456 to 554; these read APRD…TGPG and EEDE…TPGE. N-linked (GlcNAc...) asparagine glycosylation is present at N486. Residues 566–586 traverse the membrane as a helical segment; that stretch reads VVVTVVTISALLVLGSVMSVL. Topologically, residues 587–1007 are cytoplasmic; that stretch reads AIWRRPCDGK…LQLQGQGVQV (421 aa). Residues 644–899 enclose the Protein kinase domain; it reads VTLEKSLGAG…PRFSQIHSIL (256 aa). Residues 932 to 996 enclose the SAM domain; sequence PSFGSVGAWL…LSGISALQTR (65 aa).

It belongs to the protein kinase superfamily. Tyr protein kinase family. Ephrin receptor subfamily. In terms of tissue distribution, expressed in the cochlea, in the organ of Corti, spiral ganglion, and stria vascularis.

The protein resides in the cell membrane. It carries out the reaction L-tyrosyl-[protein] + ATP = O-phospho-L-tyrosyl-[protein] + ADP + H(+). Its function is as follows. Receptor for members of the ephrin-A family. Binds to EFNA3, EFNA4 and EFNA5. In Mus musculus (Mouse), this protein is Ephrin type-A receptor 10 (Epha10).